A 294-amino-acid polypeptide reads, in one-letter code: MTARIIDGKIIAADLRAQVAREVERVKHDLGLTPGLAVVLVGNDPASEVYVRSKHTQTQAAGMASFEHKLPADVAQAELLALISKLNQDPSVHGILVQLPLPKGLDTEAVINAIDPAKDVDGLHPHNAGRLAGGQPALAPCTPLGCIILSKTVHASLEGMNAIVIGRSNLVGRPLVQLLLNENATVTIAHSRSRDLPALTARADLVYAAVGRPEMVKRDWIKPGATVIDVGINRIPTPEGKTRLVGDVAYAEVAEVAGAITPVPGGVGQMTVACLLVNTLRAACAIAGLPKPSV.

Residues 166–168 (GRS), Ser-191, and Ile-232 each bind NADP(+).

Belongs to the tetrahydrofolate dehydrogenase/cyclohydrolase family. As to quaternary structure, homodimer.

The catalysed reaction is (6R)-5,10-methylene-5,6,7,8-tetrahydrofolate + NADP(+) = (6R)-5,10-methenyltetrahydrofolate + NADPH. It carries out the reaction (6R)-5,10-methenyltetrahydrofolate + H2O = (6R)-10-formyltetrahydrofolate + H(+). The protein operates within one-carbon metabolism; tetrahydrofolate interconversion. In terms of biological role, catalyzes the oxidation of 5,10-methylenetetrahydrofolate to 5,10-methenyltetrahydrofolate and then the hydrolysis of 5,10-methenyltetrahydrofolate to 10-formyltetrahydrofolate. In Bradyrhizobium sp. (strain ORS 278), this protein is Bifunctional protein FolD.